The primary structure comprises 217 residues: 3,4-dihydroxy-2-butanone 4-phosphate synthase (217 aa).

Residues 37-38 (RE), Asp42, 150-154 (RGGHT), and Glu174 contribute to the D-ribulose 5-phosphate site. Glu38 serves as a coordination point for Mg(2+). A Mg(2+)-binding site is contributed by His153.

It belongs to the DHBP synthase family. Homodimer. Requires Mg(2+) as cofactor. It depends on Mn(2+) as a cofactor.

The catalysed reaction is D-ribulose 5-phosphate = (2S)-2-hydroxy-3-oxobutyl phosphate + formate + H(+). The protein operates within cofactor biosynthesis; riboflavin biosynthesis; 2-hydroxy-3-oxobutyl phosphate from D-ribulose 5-phosphate: step 1/1. Its function is as follows. Catalyzes the conversion of D-ribulose 5-phosphate to formate and 3,4-dihydroxy-2-butanone 4-phosphate. This chain is 3,4-dihydroxy-2-butanone 4-phosphate synthase, found in Klebsiella pneumoniae subsp. pneumoniae (strain ATCC 700721 / MGH 78578).